A 398-amino-acid polypeptide reads, in one-letter code: Succinate--CoA ligase [ADP-forming] subunit beta (398 aa).

The 245-residue stretch at 9-253 (KQVLAKYGVA…ESEEDPAELE (245 aa)) folds into the ATP-grasp domain. Residues Lys-46, 53-55 (GRG), Glu-108, Cys-111, and Glu-116 each bind ATP. The Mg(2+) site is built by Asn-208 and Asp-222. Substrate contacts are provided by residues Asn-273 and 330 to 332 (GIM).

The protein belongs to the succinate/malate CoA ligase beta subunit family. In terms of assembly, heterotetramer of two alpha and two beta subunits. The cofactor is Mg(2+).

It catalyses the reaction succinate + ATP + CoA = succinyl-CoA + ADP + phosphate. The catalysed reaction is GTP + succinate + CoA = succinyl-CoA + GDP + phosphate. It participates in carbohydrate metabolism; tricarboxylic acid cycle; succinate from succinyl-CoA (ligase route): step 1/1. Its function is as follows. Succinyl-CoA synthetase functions in the citric acid cycle (TCA), coupling the hydrolysis of succinyl-CoA to the synthesis of either ATP or GTP and thus represents the only step of substrate-level phosphorylation in the TCA. The beta subunit provides nucleotide specificity of the enzyme and binds the substrate succinate, while the binding sites for coenzyme A and phosphate are found in the alpha subunit. This is Succinate--CoA ligase [ADP-forming] subunit beta from Paramagnetospirillum magneticum (strain ATCC 700264 / AMB-1) (Magnetospirillum magneticum).